We begin with the raw amino-acid sequence, 918 residues long: Chaperone protein ClpC1, chloroplastic (918 aa).

Residues 88–230 (FERFTEKAIK…RTQVIRMVGE (143 aa)) enclose the Clp R domain. Repeat stretches follow at residues 91-156 (FTEK…IGRG) and 166-230 (FTPR…MVGE). Residues 251–498 (LEEYGTNLTK…RVRLRHAQLP (248 aa)) are i. Residue 296 to 303 (GEPGVGKT) coordinates ATP. In terms of domain architecture, UVR spans 505–540 (DKELRQVTKDKNEAVRGQDFEKAGELRDREMELKAQ). Residues 565–756 (VTEADIQHIV…LLIMTSNVGS (192 aa)) form an II region. 639-646 (GPTGVGKS) contributes to the ATP binding site.

The protein belongs to the ClpA/ClpB family. ClpC subfamily. As to expression, widely expressed.

It localises to the plastid. The protein localises to the chloroplast. Its function is as follows. Molecular chaperone that may interact with a ClpP-like protease involved in degradation of denatured proteins in the chloroplast. This is Chaperone protein ClpC1, chloroplastic (CLPC1) from Oryza sativa subsp. japonica (Rice).